Consider the following 458-residue polypeptide: NADH-ubiquinone oxidoreductase chain 4 (458 aa).

12 helical membrane-spanning segments follow: residues 21-43 (ASLW…QWLN), 58-78 (IDQI…LMLL), 93-112 (RTFI…AFSA), 116-138 (TLFY…RWGN), 145-165 (AGIY…VTIL), 196-216 (GLAL…HLWL), 224-244 (PIAG…YGIM), 257-277 (LSYP…SICL), 285-305 (LIAY…MIQT), 309-329 (FSGA…LFCL), 341-361 (ILLL…WWLL), and 379-399 (LTIM…TGLA).

This sequence belongs to the complex I subunit 4 family.

The protein localises to the mitochondrion membrane. It catalyses the reaction a ubiquinone + NADH + 5 H(+)(in) = a ubiquinol + NAD(+) + 4 H(+)(out). In terms of biological role, core subunit of the mitochondrial membrane respiratory chain NADH dehydrogenase (Complex I) that is believed to belong to the minimal assembly required for catalysis. Complex I functions in the transfer of electrons from NADH to the respiratory chain. The immediate electron acceptor for the enzyme is believed to be ubiquinone. In Struthio camelus (Common ostrich), this protein is NADH-ubiquinone oxidoreductase chain 4 (MT-ND4).